The sequence spans 191 residues: Peptidyl-tRNA hydrolase (191 aa).

Tyr14 provides a ligand contact to tRNA. His19 acts as the Proton acceptor in catalysis. Residues Tyr64, Asn66, and Asn112 each coordinate tRNA.

This sequence belongs to the PTH family. Monomer.

Its subcellular location is the cytoplasm. It carries out the reaction an N-acyl-L-alpha-aminoacyl-tRNA + H2O = an N-acyl-L-amino acid + a tRNA + H(+). In terms of biological role, hydrolyzes ribosome-free peptidyl-tRNAs (with 1 or more amino acids incorporated), which drop off the ribosome during protein synthesis, or as a result of ribosome stalling. Functionally, catalyzes the release of premature peptidyl moieties from peptidyl-tRNA molecules trapped in stalled 50S ribosomal subunits, and thus maintains levels of free tRNAs and 50S ribosomes. The polypeptide is Peptidyl-tRNA hydrolase (Clostridium beijerinckii (strain ATCC 51743 / NCIMB 8052) (Clostridium acetobutylicum)).